The primary structure comprises 103 residues: Large ribosomal subunit protein eL14 (103 aa).

The protein belongs to the eukaryotic ribosomal protein eL14 family.

This chain is Large ribosomal subunit protein eL14, found in Pyrobaculum calidifontis (strain DSM 21063 / JCM 11548 / VA1).